The chain runs to 178 residues: Stathmin-2-A (178 aa).

The SLD domain maps to 38–178 (DDMEIKQLNK…RNKEQLELSG (141 aa)). Positions 75–178 (KKKDVSLGEI…RNKEQLELSG (104 aa)) form a coiled coil.

Belongs to the stathmin family. In terms of tissue distribution, nervous tissue.

The protein localises to the cytoplasm. It is found in the membrane. It localises to the cell projection. The protein resides in the lamellipodium. This chain is Stathmin-2-A (stmn2-a), found in Xenopus laevis (African clawed frog).